A 217-amino-acid chain; its full sequence is ATP synthase F(0) complex subunit a (217 aa).

Transmembrane regions (helical) follow at residues 20-40, 70-90, 100-120, 126-146, 166-188, and 193-215; these read MNWI…WILP, PAFL…FSLF, MVFS…LSTC, MIAH…MTII, LIAG…IIFI, and MIFE…SLYS.

It belongs to the ATPase A chain family. In terms of assembly, component of the ATP synthase complex composed at least of ATP5F1A/subunit alpha, ATP5F1B/subunit beta, ATP5MC1/subunit c (homooctomer), MT-ATP6/subunit a, MT-ATP8/subunit 8, ATP5ME/subunit e, ATP5MF/subunit f, ATP5MG/subunit g, ATP5MK/subunit k, ATP5MJ/subunit j, ATP5F1C/subunit gamma, ATP5F1D/subunit delta, ATP5F1E/subunit epsilon, ATP5PF/subunit F6, ATP5PB/subunit b, ATP5PD/subunit d, ATP5PO/subunit OSCP. ATP synthase complex consists of a soluble F(1) head domain (subunits alpha(3) and beta(3)) - the catalytic core - and a membrane F(0) domain - the membrane proton channel (subunits c, a, 8, e, f, g, k and j). These two domains are linked by a central stalk (subunits gamma, delta, and epsilon) rotating inside the F1 region and a stationary peripheral stalk (subunits F6, b, d, and OSCP). Interacts with DNAJC30; interaction is direct.

Its subcellular location is the mitochondrion inner membrane. The enzyme catalyses H(+)(in) = H(+)(out). Its function is as follows. Subunit a, of the mitochondrial membrane ATP synthase complex (F(1)F(0) ATP synthase or Complex V) that produces ATP from ADP in the presence of a proton gradient across the membrane which is generated by electron transport complexes of the respiratory chain. ATP synthase complex consist of a soluble F(1) head domain - the catalytic core - and a membrane F(1) domain - the membrane proton channel. These two domains are linked by a central stalk rotating inside the F(1) region and a stationary peripheral stalk. During catalysis, ATP synthesis in the catalytic domain of F(1) is coupled via a rotary mechanism of the central stalk subunits to proton translocation. With the subunit c (ATP5MC1), forms the proton-conducting channel in the F(0) domain, that contains two crucial half-channels (inlet and outlet) that facilitate proton movement from the mitochondrial intermembrane space (IMS) into the matrix. Protons are taken up via the inlet half-channel and released through the outlet half-channel, following a Grotthuss mechanism. This is ATP synthase F(0) complex subunit a from Rhopalosiphum padi (Bird cherry-oat aphid).